The chain runs to 608 residues: Epsin-3 (608 aa).

The a 1,2-diacyl-sn-glycero-3-phospho-(1D-myo-inositol-4,5-bisphosphate) site is built by R8, K11, R25, N30, R63, and H73. The region spanning 12 to 144 is the ENTH domain; that stretch reads NIVHNYSEAE…KDEERLRQER (133 aa). Disordered stretches follow at residues 150–266 and 281–475; these read TKER…QSSI and STHC…GPSA. Residues 174 to 189 are compositionally biased toward low complexity; that stretch reads GSPSSYTSASSSPRYA. Phosphoserine is present on residues S184 and S185. Positions 202-221 constitute a UIM domain; the sequence is EEELQLQLALAMSREEAEKG. 2 stretches are compositionally biased toward basic and acidic residues: residues 214-229 and 240-260; these read SREE…KGDD and GQRR…EKLK. 7 tandem repeats follow at residues 287–289, 310–312, 337–339, 353–355, 370–372, 495–497, and 508–510. Residues 287–372 are 5 X 3 AA repeats of [DE]-P-W; it reads DPWDIPGLRP…KLPSTGVDPW (86 aa). A compositionally biased stretch (pro residues) spans 346 to 363; it reads PSGPPITDPWAPSSPTPK. The tract at residues 495–607 is 3 X 3 AA repeats of N-P-F; the sequence is NPFLTGLSAP…LPPQAGTNPF (113 aa). Disordered regions lie at residues 498-530 and 575-608; these read LTGL…SPAL and GAFA…NPFL. Residues 578–588 show a composition bias toward pro residues; that stretch reads APPPASLPQPL. Repeat 3 spans residues 605 to 607; it reads NPF.

This sequence belongs to the epsin family.

It is found in the cytoplasm. The protein localises to the cell cortex. Its subcellular location is the perinuclear region. The protein resides in the cytoplasmic vesicle. It localises to the clathrin-coated vesicle. It is found in the nucleus. The polypeptide is Epsin-3 (Epn3) (Rattus norvegicus (Rat)).